Reading from the N-terminus, the 325-residue chain is Elongation factor P--(R)-beta-lysine ligase (325 aa).

Position 76–78 (76–78 (SPE)) interacts with substrate. Residues 100-102 (RNE) and Asn-109 contribute to the ATP site. A substrate-binding site is contributed by Tyr-118. ATP is bound at residue 244–245 (EL). Glu-251 is a substrate binding site. Position 300 (Gly-300) interacts with ATP.

The protein belongs to the class-II aminoacyl-tRNA synthetase family. EpmA subfamily. As to quaternary structure, homodimer.

It carries out the reaction D-beta-lysine + L-lysyl-[protein] + ATP = N(6)-((3R)-3,6-diaminohexanoyl)-L-lysyl-[protein] + AMP + diphosphate + H(+). Its function is as follows. With EpmB is involved in the beta-lysylation step of the post-translational modification of translation elongation factor P (EF-P) on 'Lys-34'. Catalyzes the ATP-dependent activation of (R)-beta-lysine produced by EpmB, forming a lysyl-adenylate, from which the beta-lysyl moiety is then transferred to the epsilon-amino group of EF-P 'Lys-34'. The protein is Elongation factor P--(R)-beta-lysine ligase of Salmonella choleraesuis (strain SC-B67).